The chain runs to 159 residues: RxLR effector protein 24 (159 aa).

A signal peptide spans 1–18 (MRFLVWVFFVGLVTFVSG). Residues 58–82 (RFLRSNANQDLTTANDDSDVKEEER) carry the RxLR-dEER motif. The interval 109 to 159 (EKAFQHMMKQGETPTSLAKRLEIGGAAELRYEKVYEKYTAWWINYHTVAGT) is RABA-binding domain.

This sequence belongs to the RxLR effector family. In terms of assembly, interacts with potato RABA GTPases including RABA1a, RABA2a and RABA4a.

The protein localises to the secreted. It is found in the host cell membrane. The protein resides in the host endomembrane system. Effector protein that contributes to pathogen virulence. Targets members of the RABA GTPases subfamily to inhibit vesicular secretion, leading to an accumulation of secretory proteins in the endoplasmic reticulum. The sequence is that of RxLR effector protein 24 from Phytophthora infestans (strain T30-4) (Potato late blight agent).